Here is a 174-residue protein sequence, read N- to C-terminus: Ubiquitin-fold modifier-conjugating enzyme 1 (174 aa).

C119 acts as the Glycyl thioester intermediate in catalysis.

It belongs to the ubiquitin-conjugating enzyme family. UFC1 subfamily.

E2-like enzyme which forms an intermediate with UFM1 via a thioester linkage. This chain is Ubiquitin-fold modifier-conjugating enzyme 1, found in Arabidopsis thaliana (Mouse-ear cress).